A 129-amino-acid polypeptide reads, in one-letter code: Small ribosomal subunit protein uS8 (129 aa).

This sequence belongs to the universal ribosomal protein uS8 family. As to quaternary structure, part of the 30S ribosomal subunit. Contacts proteins S5 and S12.

Functionally, one of the primary rRNA binding proteins, it binds directly to 16S rRNA central domain where it helps coordinate assembly of the platform of the 30S subunit. The chain is Small ribosomal subunit protein uS8 from Colwellia psychrerythraea (strain 34H / ATCC BAA-681) (Vibrio psychroerythus).